The sequence spans 160 residues: Xanthine-guanine phosphoribosyltransferase (160 aa).

5-phospho-alpha-D-ribose 1-diphosphate contacts are provided by residues 41-42 (RG) and 93-101 (DDLVDTGRT). Position 94 (D94) interacts with Mg(2+). The guanine site is built by D97 and I140. 2 residues coordinate xanthine: D97 and I140. GMP contacts are provided by residues 97-101 (DTGRT) and 139-140 (WI).

The protein belongs to the purine/pyrimidine phosphoribosyltransferase family. XGPT subfamily. Homotetramer. The cofactor is Mg(2+).

The protein localises to the cell inner membrane. The enzyme catalyses GMP + diphosphate = guanine + 5-phospho-alpha-D-ribose 1-diphosphate. It catalyses the reaction XMP + diphosphate = xanthine + 5-phospho-alpha-D-ribose 1-diphosphate. The catalysed reaction is IMP + diphosphate = hypoxanthine + 5-phospho-alpha-D-ribose 1-diphosphate. It participates in purine metabolism; GMP biosynthesis via salvage pathway; GMP from guanine: step 1/1. The protein operates within purine metabolism; XMP biosynthesis via salvage pathway; XMP from xanthine: step 1/1. Its function is as follows. Purine salvage pathway enzyme that catalyzes the transfer of the ribosyl-5-phosphate group from 5-phospho-alpha-D-ribose 1-diphosphate (PRPP) to the N9 position of the 6-oxopurines guanine and xanthine to form the corresponding ribonucleotides GMP (guanosine 5'-monophosphate) and XMP (xanthosine 5'-monophosphate), with the release of PPi. To a lesser extent, also acts on hypoxanthine. The protein is Xanthine-guanine phosphoribosyltransferase of Desulfotalea psychrophila (strain LSv54 / DSM 12343).